The sequence spans 160 residues: Thebaine synthase 2 (160 aa).

Ser74 contributes to the thebaine binding site. The active-site Proton acceptor is the His89. Thr105 is a binding site for thebaine.

Belongs to the MLP family. Homodimer (allosteric) and oligomers. Expressed in poppy latex.

It catalyses the reaction (7S)-O-acetylsalutaridinol = thebaine + acetate + H(+). Its pathway is alkaloid biosynthesis; morphine biosynthesis. With respect to regulation, slightly inhibited by salutaridine and (7S)-salutaridinol. Catalyzes the formation of thebaine from (7S)-salutaridinol 7-O-acetate at the expense of labile hydroxylated by-products, which are preferentially produced by spontaneous allylic elimination. No visible activity toward (7S)-salutaridinol (at pH 7). This Papaver somniferum (Opium poppy) protein is Thebaine synthase 2.